The primary structure comprises 313 residues: Ribosomal protein L11 methyltransferase (313 aa).

S-adenosyl-L-methionine is bound by residues threonine 161, glycine 182, aspartate 204, and asparagine 247.

It belongs to the methyltransferase superfamily. PrmA family.

It localises to the cytoplasm. It catalyses the reaction L-lysyl-[protein] + 3 S-adenosyl-L-methionine = N(6),N(6),N(6)-trimethyl-L-lysyl-[protein] + 3 S-adenosyl-L-homocysteine + 3 H(+). In terms of biological role, methylates ribosomal protein L11. The sequence is that of Ribosomal protein L11 methyltransferase from Alkaliphilus oremlandii (strain OhILAs) (Clostridium oremlandii (strain OhILAs)).